The primary structure comprises 345 residues: Alpha-2-HS-glycoprotein (345 aa).

Positions 1–18 are cleaved as a signal peptide; the sequence is MKSLVLLLCFAQLWGCQS. Positions 19–133 constitute a Cystatin fetuin-A-type 1 domain; that stretch reads APQGTGLGFR…QFRVMHTQCH (115 aa). 6 disulfides stabilise this stretch: Cys-32-Cys-336, Cys-89-Cys-100, Cys-114-Cys-132, Cys-146-Cys-149, Cys-208-Cys-219, and Cys-230-Cys-247. N-linked (GlcNAc...) asparagine glycosylation occurs at Asn-99. Ser-134 is modified (phosphoserine). Position 135 is a phosphothreonine (Thr-135). Ser-138 carries the post-translational modification Phosphoserine. A Cystatin fetuin-A-type 2 domain is found at 144–250; the sequence is KLCPRCPLLT…EEVSVACKLF (107 aa). Residues Asn-156 and Asn-176 are each glycosylated (N-linked (GlcNAc...) asparagine). Phosphoserine is present on residues Ser-305, Ser-309, Ser-312, and Ser-314. The tract at residues 312-334 is disordered; sequence SASGETLHSPKVGQPGAAGPVSP.

The protein belongs to the fetuin family. Phosphorylated by FAM20C in the extracellular medium. Liver is the major site of synthesis, but fetuin is also expressed in limb buds and other extrahepatic tissues during development.

It is found in the secreted. In terms of biological role, probably involved in differentiation. Functionally, (Microbial infection) Facilitates invasion of hepatocytes by Plasmodium berghei sporozoites. This chain is Alpha-2-HS-glycoprotein (Ahsg), found in Mus musculus (Mouse).